The chain runs to 668 residues: COBRA-like protein 11 (668 aa).

Residues 1–29 (MKKLRYVHLNLLLLLLPLINLQFPTLSLA) form the signal peptide. Residues Asn69, Asn125, Asn254, Asn318, Asn329, Asn358, Asn412, Asn432, Asn473, Asn552, Asn560, and Asn579 are each glycosylated (N-linked (GlcNAc...) asparagine). Ser636 is lipidated: GPI-anchor amidated serine. The propeptide at 637 to 668 (SGMRLSGIRFLPSILLAITTFHAITDRLLTGV) is removed in mature form.

It belongs to the COBRA family. As to expression, mostly expressed in flowers, stamen, anthers and pollen, and, to a lower extent, possibly in roots, stems, leaves and siliques.

Its subcellular location is the cell membrane. Involved in the deposition of apical pectin cap and cellulose microfibrils in pollen tubes. Implicated in pollen tubes growth in the female transmitting tract of pistil and toward micropyles, via the perception of ovule guidance cues. The polypeptide is COBRA-like protein 11 (Arabidopsis thaliana (Mouse-ear cress)).